A 206-amino-acid chain; its full sequence is Ras-related protein O-RAL (206 aa).

21–28 (GSGGVGKS) is a binding site for GTP. The Effector region motif lies at 43–51 (YEPTKADSY). Residues 68-72 (DTAGQ) and 128-131 (NKSD) contribute to the GTP site. A compositionally biased stretch (basic and acidic residues) spans 180–189 (KMSENKDKNG). Positions 180 to 206 (KMSENKDKNGKKSSRNKKSLRERCCIL) are disordered. The residue at position 203 (Cys203) is a Cysteine methyl ester. Cys203 carries S-geranylgeranyl cysteine lipidation. A propeptide spans 204-206 (CIL) (removed in mature form).

The protein belongs to the small GTPase superfamily. Ras family.

It is found in the cell membrane. The enzyme catalyses GTP + H2O = GDP + phosphate + H(+). This chain is Ras-related protein O-RAL, found in Diplobatis ommata (Ocellated electric ray).